Here is a 200-residue protein sequence, read N- to C-terminus: MLTEKQEAILDYIRSVQAQRGVPPSTREIQRHFGYESQNAAMNHLRALARKGQLHQVDGATWGLKVSEVQGHFELPIYGTIPAGVPSMQEQQPKETITFDPAVFRLRRPERLWGLEVHGDSMIDAHILDGDIAVLERREAKPGDIVAALVDETTTTLKRLAYVKGKPVLKPENARYALIVPKDRLEIQGVFVGLIGRAKR.

Active-site for autocatalytic cleavage activity residues include S121 and K158.

Belongs to the peptidase S24 family. In terms of assembly, homodimer.

The catalysed reaction is Hydrolysis of Ala-|-Gly bond in repressor LexA.. Binds a consensus sequence 5'-TGTTC-N(4)-GAACA-3'; some genes have a tandem consensus sequence and their binding is cooperative. Binds to the promoters of a number of genes, including lexA and splB. Represses a number of genes involved in the response to DNA damage (SOS response). This Opitutus terrae (strain DSM 11246 / JCM 15787 / PB90-1) protein is LexA repressor.